Reading from the N-terminus, the 91-residue chain is Small ribosomal subunit protein bS20 (91 aa).

Belongs to the bacterial ribosomal protein bS20 family.

Its function is as follows. Binds directly to 16S ribosomal RNA. This Acidithiobacillus ferrooxidans (strain ATCC 23270 / DSM 14882 / CIP 104768 / NCIMB 8455) (Ferrobacillus ferrooxidans (strain ATCC 23270)) protein is Small ribosomal subunit protein bS20.